The primary structure comprises 227 residues: uncharacterized protein (227 aa).

The next 2 membrane-spanning stretches (helical) occupy residues 12 to 32 and 80 to 100; these read IVLF…YLYA and IILI…KIPL.

It localises to the cell membrane. This is an uncharacterized protein from Methanocaldococcus jannaschii (strain ATCC 43067 / DSM 2661 / JAL-1 / JCM 10045 / NBRC 100440) (Methanococcus jannaschii).